The following is a 940-amino-acid chain: Receptor-like protein 9b (940 aa).

The signal sequence occupies residues 1–28 (MLMMFSPAFVMVMDLMVLVMMIMMMVSS). Over 29 to 895 (LDAHGHISCI…GDEETTIDME (867 aa)) the chain is Extracellular. N53, N63, N66, N101, N115, and N151 each carry an N-linked (GlcNAc...) asparagine glycan. LRR repeat units lie at residues 108–136 (FGEL…SFER), 137–163 (LKNL…TASS), 165–185 (KTLI…ELIN), 186–211 (LRNL…NFHN), 213–232 (QGLD…LCQL), 233–255 (KNLR…CFDS), 257–279 (TQLQ…LIRN), 281–304 (DSVE…LIAN), 306–330 (SKLK…SLQP), 331–354 (KFQL…IQHQ), 355–378 (KDLH…LLEK), 379–402 (YPNL…RLLN), 403–426 (HTLQ…IGKV), 427–450 (LPNI…SFGE), 452–475 (KDIK…FLIG), and 477–502 (SSLH…NFGS). N-linked (GlcNAc...) asparagine glycosylation is found at N270 and N304. N-linked (GlcNAc...) asparagine glycans are attached at residues N361, N389, and N402. N-linked (GlcNAc...) asparagine glycosylation is found at N434 and N463. An LRR 17; degenerate repeat occupies 503 to 522 (LVVLIANNNLFTGIADGLRN). LRR repeat units lie at residues 523–546 (VQSL…WFGG), 547–570 (FFFA…LFSK), 571–593 (PTFK…HFTG), 595–615 (DMSL…STLI), 616–639 (KDVL…VKNE), 641–662 (ILSL…LCGL), 663–686 (RSIR…LNNV), 752–776 (FNFM…LGDL), 777–799 (QRIR…SFSN), 801–824 (TDIE…LSKL), and 826–849 (YMVV…KFST). N685 carries N-linked (GlcNAc...) asparagine glycosylation. N783 and N799 each carry an N-linked (GlcNAc...) asparagine glycan. N-linked (GlcNAc...) asparagine glycosylation is found at N831, N836, N867, and N873. A helical membrane pass occupies residues 896 to 916 (IFYWSLAATYGVTWITFIVFL). Residues 917 to 940 (CFDSPWRRVWFHFVDAFISLFKCV) lie on the Cytoplasmic side of the membrane.

Belongs to the RLP family.

It is found in the cell membrane. The polypeptide is Receptor-like protein 9b (Arabidopsis thaliana (Mouse-ear cress)).